The chain runs to 580 residues: Trafficking protein particle complex subunit 14 (580 aa).

Disordered stretches follow at residues 95-134 (GSAG…TSGG) and 480-533 (VSHP…RSGS). The span at 105–116 (PGGGDPGGGGLF) shows a compositional bias: gly residues. The residue at position 491 (serine 491) is a Phosphoserine. Residues 492–502 (RKSSPSSPAVR) are compositionally biased toward low complexity. Over residues 512–525 (LGRSQSFSHQQPSR) the composition is skewed to polar residues. Serine 517 bears the Phosphoserine mark. Threonine 541 is subject to Phosphothreonine. Position 546 is a phosphoserine (serine 546).

In terms of assembly, component of the multisubunit TRAPP II complex, which includes at least TRAPPC1, TRAPPC2, TRAPPC2L, TRAPPC3, TRAPPC4, TRAPPC5, TRAPPC6A/B, TRAPPC9, TRAPPC10 and TRAPPC14. TRAPPC9, TRAPPC10 and TRAPPC14 are specific subunits of the TRAPP II complex. Interacts with alpha-tubulin during mitosis. Interacts with RAB3IP (via the N-terminal region); this interaction mediates RAB3IP association with the TRAPP II complex. Interacts with TRAPPC10. Interacts with FBF1.

The protein resides in the cytoplasm. It localises to the cytoskeleton. Its subcellular location is the spindle. It is found in the vesicle. The protein localises to the midbody. Functionally, specific subunit of the TRAPP (transport protein particle) II complex, a highly conserved vesicle tethering complex that functions in late Golgi trafficking as a membrane tether. TRAPPC14 is dispensable for TRAPPII complex integrity but mediates RAB3IP preciliary vesicle trafficking to the mother centriole during ciliogenesis. Modulates YAP1 activity as transcriptional regulator. The chain is Trafficking protein particle complex subunit 14 from Mus musculus (Mouse).